A 232-amino-acid chain; its full sequence is 2-C-methyl-D-erythritol 4-phosphate cytidylyltransferase (232 aa).

It belongs to the IspD/TarI cytidylyltransferase family. IspD subfamily.

The catalysed reaction is 2-C-methyl-D-erythritol 4-phosphate + CTP + H(+) = 4-CDP-2-C-methyl-D-erythritol + diphosphate. It functions in the pathway isoprenoid biosynthesis; isopentenyl diphosphate biosynthesis via DXP pathway; isopentenyl diphosphate from 1-deoxy-D-xylulose 5-phosphate: step 2/6. Catalyzes the formation of 4-diphosphocytidyl-2-C-methyl-D-erythritol from CTP and 2-C-methyl-D-erythritol 4-phosphate (MEP). The polypeptide is 2-C-methyl-D-erythritol 4-phosphate cytidylyltransferase (Vibrio cholerae serotype O1 (strain ATCC 39315 / El Tor Inaba N16961)).